The primary structure comprises 192 residues: Glycerol-3-phosphate acyltransferase (192 aa).

Transmembrane regions (helical) follow at residues 5–25, 50–70, 78–98, 112–132, and 153–173; these read VVLILSYILGSIPFSLIITRI, FLAALALFLDSFKGFIAVYIA, DFYIYVSAILAVLGHMFPIWL, ILIAFNIDITLVFVIIWIIVF, and SFFFQRNLFLTLLIIGALVFL.

The protein belongs to the PlsY family. In terms of assembly, probably interacts with PlsX.

It localises to the cell membrane. It catalyses the reaction an acyl phosphate + sn-glycerol 3-phosphate = a 1-acyl-sn-glycero-3-phosphate + phosphate. It participates in lipid metabolism; phospholipid metabolism. Its function is as follows. Catalyzes the transfer of an acyl group from acyl-phosphate (acyl-PO(4)) to glycerol-3-phosphate (G3P) to form lysophosphatidic acid (LPA). This enzyme utilizes acyl-phosphate as fatty acyl donor, but not acyl-CoA or acyl-ACP. This Wolbachia pipientis wMel protein is Glycerol-3-phosphate acyltransferase.